The sequence spans 453 residues: G-protein coupled receptor 39 (453 aa).

The Extracellular portion of the chain corresponds to 1–34 (MASPSLPGSDCSQIIDHSHVPEFEVATWIKITLI). Cystine bridges form between C11–C191 and C108–C210. Residues H17 and H19 each coordinate Zn(2+). A helical transmembrane segment spans residues 35 to 55 (LVYLIIFVMGLLGNSATIRVT). The Cytoplasmic portion of the chain corresponds to 56–69 (QVLQKKGYLQKEVT). A helical transmembrane segment spans residues 70–89 (DHMVSLACSDILVFLIGMPM). The Extracellular portion of the chain corresponds to 90–109 (EFYSIIWNPLTTSSYTLSCK). The chain crosses the membrane as a helical span at residues 110-131 (LHTFLFEACSYATLLHVLTLSF). At 132–151 (ERYIAICHPFRYKAVSGPCQ) the chain is on the cytoplasmic side. A helical transmembrane segment spans residues 152–172 (VKLLIGFVWVTSALVALPLLF). Topologically, residues 173 to 217 (AMGTEYPLVNVPSHRGLTCNRSSTRHHEQPETSNMSICTNLSSRW) are extracellular. N-linked (GlcNAc...) asparagine glycans are attached at residues N192, N206, and N212. A helical transmembrane segment spans residues 218–242 (TVFQSSIFGAFVVYLVVLLSVAFMC). Residues 243–283 (WNMMQVLMKSQKGSLAGGTRPPQLRKSESEESRTARRQTII) are Cytoplasmic-facing. The interval 255–274 (GSLAGGTRPPQLRKSESEES) is disordered. The chain crosses the membrane as a helical span at residues 284–305 (FLRLIVVTLAVCWMPNQIRRIM). At 306–323 (AAAKPKHDWTRSYFRAYM) the chain is on the extracellular side. The chain crosses the membrane as a helical span at residues 324 to 344 (ILLPFSETFFYLSSVINPLLY). Residues 345–453 (TVSSQQFRRV…AENGFQEHEV (109 aa)) lie on the Cytoplasmic side of the membrane. S396 is modified (phosphoserine). Residues 415-453 (SEAEPQSKSQSLSLESLEPNSGAKPANSAAENGFQEHEV) form a disordered region. A compositionally biased stretch (low complexity) spans 418 to 435 (EPQSKSQSLSLESLEPNS).

It belongs to the G-protein coupled receptor 1 family. In terms of assembly, interacts with HTR1A. Interacts with GALR1. Expressed in many tissues, including the stomach, intestine and hypothalamus.

It is found in the cell membrane. Functionally, zinc-sensing receptor that can sense changes in extracellular Zn(2+), mediate Zn(2+) signal transmission, and participates in the regulation of numerous physiological processes including glucose homeostasis regulation, gastrointestinal mobility, hormone secretion and cell death. Activation by Zn(2+) in keratinocytes increases the intracellular concentration of Ca(2+) and activates the ERK/MAPK and PI3K/AKT signaling pathways leading to epithelial repair. Plays an essential role in normal wound healing by inducing the production of cytokines including the major inflammatory cytokine IL6 via the PKC/MAPK/CEBPB pathway. Regulates adipose tissue metabolism, especially lipolysis, and regulates the function of lipases, such as hormone-sensitive lipase and adipose triglyceride lipase. Plays a role in the inhibition of cell death and protects against oxidative, endoplasmic reticulum and mitochondrial stress by inducing secretion of the cytoprotective pigment epithelium-derived growth factor (PEDF) and probably other protective transcripts in a GNA13/RHOA/SRE-dependent manner. Forms dynamic heteroreceptor complexes with HTR1A and GALR1 depending on cell type or specific physiological states, resulting in signaling diversity: HTR1A-GPR39 shows additive increase in signaling along the serum response element (SRE) and NF-kappa-B pathways while GALR1 acts as an antagonist blocking SRE. This chain is G-protein coupled receptor 39 (GPR39), found in Homo sapiens (Human).